A 219-amino-acid polypeptide reads, in one-letter code: N-(5'-phosphoribosyl)anthranilate isomerase (219 aa).

The protein belongs to the TrpF family.

The enzyme catalyses N-(5-phospho-beta-D-ribosyl)anthranilate = 1-(2-carboxyphenylamino)-1-deoxy-D-ribulose 5-phosphate. It participates in amino-acid biosynthesis; L-tryptophan biosynthesis; L-tryptophan from chorismate: step 3/5. The chain is N-(5'-phosphoribosyl)anthranilate isomerase from Bordetella avium (strain 197N).